The sequence spans 154 residues: MAIELDLQLAVEDQNGLPSAQDFQTWLDKTIPPFQPQAEVTIRIVDSQESHQLNHDYRGKDKPTNVLSFPFEAPPGMEMDLLGDLVICRQVVEQEAIEQDKPLMAHWAHMVVHGSLHLLGYDHIEDDEAEEMESLETEIMQGMGFTDPYLAEKE.

Zn(2+)-binding residues include His113, His117, and His123.

The protein belongs to the endoribonuclease YbeY family. It depends on Zn(2+) as a cofactor.

The protein resides in the cytoplasm. Functionally, single strand-specific metallo-endoribonuclease involved in late-stage 70S ribosome quality control and in maturation of the 3' terminus of the 16S rRNA. In Vibrio vulnificus (strain YJ016), this protein is Endoribonuclease YbeY.